The following is a 488-amino-acid chain: UDP-glycosyltransferase 85A3 (488 aa).

Residues S306, 363 to 365 (CPQ), 380 to 388 (HCGWNSTLE), and 402 to 405 (FAEQ) each bind UDP-alpha-D-glucose.

It belongs to the UDP-glycosyltransferase family. Expressed in roots and flowers.

The chain is UDP-glycosyltransferase 85A3 (UGT85A3) from Arabidopsis thaliana (Mouse-ear cress).